Consider the following 194-residue polypeptide: Xanthine phosphoribosyltransferase (194 aa).

Positions 20 and 27 each coordinate xanthine. 128–132 serves as a coordination point for 5-phospho-alpha-D-ribose 1-diphosphate; the sequence is ANGEA. A xanthine-binding site is contributed by Lys156.

The protein belongs to the purine/pyrimidine phosphoribosyltransferase family. Xpt subfamily. As to quaternary structure, homodimer.

Its subcellular location is the cytoplasm. It catalyses the reaction XMP + diphosphate = xanthine + 5-phospho-alpha-D-ribose 1-diphosphate. It participates in purine metabolism; XMP biosynthesis via salvage pathway; XMP from xanthine: step 1/1. In terms of biological role, converts the preformed base xanthine, a product of nucleic acid breakdown, to xanthosine 5'-monophosphate (XMP), so it can be reused for RNA or DNA synthesis. The protein is Xanthine phosphoribosyltransferase of Macrococcus caseolyticus (strain JCSC5402) (Macrococcoides caseolyticum).